A 145-amino-acid polypeptide reads, in one-letter code: UPF0201 protein M164_1168 (145 aa).

It belongs to the UPF0201 family.

This chain is UPF0201 protein M164_1168, found in Saccharolobus islandicus (strain M.16.4 / Kamchatka #3) (Sulfolobus islandicus).